Reading from the N-terminus, the 501-residue chain is 2-phosphoxylose phosphatase 1 (501 aa).

The Cytoplasmic segment spans residues 1-6 (MLLRNR). The helical; Signal-anchor for type II membrane protein transmembrane segment at 7 to 27 (FLLLLALAGLLAFLSLSLQFF) threads the bilayer. Topologically, residues 28–501 (SRWLPVSLQL…YYDACHQRLF (474 aa)) are lumenal. Histidine 120 (nucleophile) is an active-site residue. N-linked (GlcNAc...) asparagine glycosylation is found at asparagine 328 and asparagine 377. Aspartate 402 acts as the Proton donor in catalysis. A glycan (N-linked (GlcNAc...) asparagine) is linked at asparagine 488.

It belongs to the histidine acid phosphatase family.

The protein localises to the golgi apparatus membrane. It carries out the reaction 3-O-[beta-D-GlcA-(1-&gt;3)-beta-D-Gal-(1-&gt;3)-beta-D-Gal-(1-&gt;4)-beta-D-2-O-P-Xyl]-L-seryl-[protein] + H2O = 3-O-(beta-D-GlcA-(1-&gt;3)-beta-D-Gal-(1-&gt;3)-beta-D-Gal-(1-&gt;4)-beta-D-Xyl)-L-seryl-[protein] + phosphate. Functionally, responsible for the 2-O-dephosphorylation of xylose in the glycosaminoglycan-protein linkage region of proteoglycans thereby regulating the amount of mature glycosaminoglycan (GAG) chains. Sulfated glycosaminoglycans (GAGs), including heparan sulfate and chondroitin sulfate, are synthesized on the so-called common GAG-protein linkage region (GlcUAbeta1-3Galbeta1-3Galbeta1-4Xylbeta1-O-Ser) of core proteins, which is formed by the stepwise addition of monosaccharide residues by the respective specific glycosyltransferases. Xylose 2-O-dephosphorylation during completion of linkage region formation is a prerequisite for the initiation and efficient elongation of the repeating disaccharide region of GAG chains. This is 2-phosphoxylose phosphatase 1 from Xenopus tropicalis (Western clawed frog).